Here is a 281-residue protein sequence, read N- to C-terminus: Elongation factor 1-delta (281 aa).

Residue Ala-2 is modified to N-acetylalanine. Lys-17 is modified (N6-acetyllysine). Phosphoserine is present on residues Ser-37, Ser-44, Ser-60, Ser-86, and Ser-106. Residues 80–115 form a leucine-zipper region; it reads LVVRIASLEVENQSLRGVVQELQQAISKLEARLNVL. At Lys-107 the chain carries N6-acetyllysine. Lys-117 is subject to N6-acetyllysine; alternate. Lys-117 is modified (N6-succinyllysine; alternate). The segment at 118-172 is disordered; it reads SSPGHRATAPQTQHVSPMRQVEPPAKKPATPAEDDEDDDIDLFGSDNEEEDKEAA. A Phosphoserine modification is found at Ser-119. At Thr-129 the chain carries Phosphothreonine. The residue at position 133 (Ser-133) is a Phosphoserine. Thr-147 is modified (phosphothreonine). A compositionally biased stretch (acidic residues) spans 149 to 169; that stretch reads AEDDEDDDIDLFGSDNEEEDK. A Phosphoserine; by CK2 modification is found at Ser-162. A catalytic (GEF) region spans residues 173–281; it reads QLREERLRQY…SVDIAAFNKI (109 aa).

Belongs to the EF-1-beta/EF-1-delta family. In terms of assembly, EF-1 is composed of 4 subunits: alpha, beta, delta isoform 1, and gamma. Isoform 2 interacts with HSF1 and NFE2L2.

Its subcellular location is the nucleus. Its function is as follows. EF-1-beta and EF-1-delta stimulate the exchange of GDP bound to EF-1-alpha to GTP, regenerating EF-1-alpha for another round of transfer of aminoacyl-tRNAs to the ribosome. In terms of biological role, regulates induction of heat-shock-responsive genes through association with heat shock transcription factors and direct DNA-binding at heat shock promoter elements (HSE). The protein is Elongation factor 1-delta (EEF1D) of Macaca fascicularis (Crab-eating macaque).